A 430-amino-acid chain; its full sequence is Putative aspergillopepsin A-like aspartic endopeptidase MCYG_07979 (430 aa).

The N-terminal stretch at 1 to 17 (MHLSSLLVAVLLPLALS) is a signal peptide. Residues 18–87 (KPTPRKKPGS…SKIAGGAPGA (70 aa)) constitute a propeptide, activation peptide. The interval 59–105 (STQGMDGYRPEPISRFQGNSKIAGGAPGAKDDGKDEKGEVENNPTSH) is disordered. The span at 87 to 98 (AKDDGKDEKGEV) shows a compositional bias: basic and acidic residues. Residues 109 to 427 (FLSPVTIGGQ…DYRGPSVSLA (319 aa)) form the Peptidase A1 domain. Asp125 is a catalytic residue. N-linked (GlcNAc...) asparagine glycosylation is present at Asn306. Residue Asp314 is part of the active site. N-linked (GlcNAc...) asparagine glycosylation is present at Asn352.

Belongs to the peptidase A1 family.

It is found in the secreted. This chain is Putative aspergillopepsin A-like aspartic endopeptidase MCYG_07979, found in Arthroderma otae (strain ATCC MYA-4605 / CBS 113480) (Microsporum canis).